We begin with the raw amino-acid sequence, 159 residues long: NADH-quinone oxidoreductase subunit B (159 aa).

Residues C36, C37, C102, and C132 each contribute to the [4Fe-4S] cluster site.

This sequence belongs to the complex I 20 kDa subunit family. NDH-1 is composed of 14 different subunits. Subunits NuoB, C, D, E, F, and G constitute the peripheral sector of the complex. It depends on [4Fe-4S] cluster as a cofactor.

The protein localises to the cell inner membrane. It carries out the reaction a quinone + NADH + 5 H(+)(in) = a quinol + NAD(+) + 4 H(+)(out). NDH-1 shuttles electrons from NADH, via FMN and iron-sulfur (Fe-S) centers, to quinones in the respiratory chain. The immediate electron acceptor for the enzyme in this species is believed to be ubiquinone. Couples the redox reaction to proton translocation (for every two electrons transferred, four hydrogen ions are translocated across the cytoplasmic membrane), and thus conserves the redox energy in a proton gradient. This Acidovorax ebreus (strain TPSY) (Diaphorobacter sp. (strain TPSY)) protein is NADH-quinone oxidoreductase subunit B.